The primary structure comprises 332 residues: 2,3-diketo-L-gulonate reductase (332 aa).

His44 serves as the catalytic Proton donor. Residues 168 to 174 (ITMVDMS), 224 to 225 (WK), and 304 to 306 (GHE) each bind NAD(+).

Belongs to the LDH2/MDH2 oxidoreductase family. DlgD subfamily. Homodimer.

It localises to the cytoplasm. The catalysed reaction is 3-dehydro-L-gulonate + NAD(+) = 2,3-dioxo-L-gulonate + NADH + H(+). The enzyme catalyses 3-dehydro-L-gulonate + NADP(+) = 2,3-dioxo-L-gulonate + NADPH + H(+). Its function is as follows. Catalyzes the reduction of 2,3-diketo-L-gulonate in the presence of NADH, to form 3-keto-L-gulonate. This Salmonella typhimurium (strain LT2 / SGSC1412 / ATCC 700720) protein is 2,3-diketo-L-gulonate reductase.